Consider the following 204-residue polypeptide: MDNYSLLSTPRPRISSSALSAFPDIMSSLATSLPDLGDTQNGEQLRRNCTIYRPWFSPYSYFVCTDKESHLEAYGFPEVDREEGRGDNCLLEDVAESVCSSSSSQENTYPREANRKSKHGLDSITSQDILMASKWHPAQQNGYKCASCCRMYPTLHSLKSHIKGGFKEGFSCKVYYRKLKTLWGKEQKARTGDRISLGSCQAFK.

The tract at residues 101-120 (SSSSQENTYPREANRKSKHG) is disordered.

In terms of tissue distribution, testis-specific.

It localises to the nucleus membrane. Plays a role in spermiogenesis and fertilization. This Mus musculus (Mouse) protein is Spermatogenesis-associated protein 46 (Spata46).